A 149-amino-acid chain; its full sequence is UPF0310 protein SSO2595 (149 aa).

Belongs to the UPF0310 family.

The sequence is that of UPF0310 protein SSO2595 from Saccharolobus solfataricus (strain ATCC 35092 / DSM 1617 / JCM 11322 / P2) (Sulfolobus solfataricus).